The chain runs to 222 residues: Eukaryotic translation initiation factor 4E-1 (222 aa).

Residues 1–22 (MVDEVEKPASLEESKTNTREVE) are compositionally biased toward basic and acidic residues. The tract at residues 1–37 (MVDEVEKPASLEESKTNTREVEEGAEEVIESDDTMSS) is disordered. Residues 23 to 33 (EGAEEVIESDD) are compositionally biased toward acidic residues. EIF4G-binding regions lie at residues 47–50 (HPLE) and 57–93 (FDNP…NNIH). MRNA is bound by residues 65 to 70 (KQAAWG), Lys-97, and 115 to 116 (WE). A disulfide bond links Cys-120 and Cys-158. Residues 141–150 (YTLLAMIGEQ) are EIF4G-binding. MRNA-binding positions include 165 to 170 (RVRQEK) and 210 to 214 (KKLDR).

The protein belongs to the eukaryotic initiation factor 4E family. In terms of assembly, EIF4F is a multi-subunit complex, the composition of which varies with external and internal environmental conditions. It is composed of at least EIF4A, EIF4E and EIF4G. EIF4E is also known to interact with other partners. In higher plants two isoforms of EIF4F have been identified, named isoform EIF4F and isoform EIF(iso)4F. Isoform EIF4F has subunits p220 and p26, whereas isoform EIF(iso)4F has subunits p82 and p28. Post-translationally, according to the redox status, the Cys-120-Cys-158 disulfide bridge may have a role in regulating protein function by affecting its ability to bind capped mRNA. In terms of tissue distribution, expressed ubiquitously in seedlings, roots, leaves, sepals, petals, anthers and dehisced pollen, with highest levels in pollen, maturing anthers and roots. Strongly expressed in susceptible plants but not in resistant ones.

The protein resides in the nucleus. The protein localises to the cytoplasm. Component of the protein complex eIF4F, which is involved in the recognition of the mRNA cap, ATP-dependent unwinding of 5'-terminal secondary structure and recruitment of mRNA to the ribosome. Recognizes and binds the 7-methylguanosine-containing mRNA cap during an early step in the initiation of protein synthesis and facilitates ribosome binding by inducing the unwinding of the mRNAs secondary structures. Key component of recessive resistance to potyviruses. Its function is as follows. (Microbial infection) Susceptibility host factor required for viral infection (e.g. potato virus Y (PVY) and pepper mottle virus (PepMoV)) by recruiting viral RNAs to the host ribosomal complex via an interaction with viral genome-linked protein (VPg). The polypeptide is Eukaryotic translation initiation factor 4E-1 (Nicotiana tabacum (Common tobacco)).